Consider the following 447-residue polypeptide: MDMLLNPLNRRHRLRHDIPVVPGAFPLVGHLPAVVCDLPRLLRRAERTLGSHFWLDFGPAGHLMTSLDPDALALLRHKDVSSGLIEDIAPELFGGTLVAQDGIAHRQARDAIQAALLPKGLTLAGIGELFAPVIRARVQRWRERGDVTILRETGDLMLKLIFSLMGIPAQDLPGWHRKYRQLLQLIVAPPVDLPGLPLRRGRAARDWIDARLREFVRAAREHASRTGLINDMVSAFDRSDDALSDDVLVANIRLLLLGGHDTTASTMAWMVIELARQPGLWDALVEEAQRVGAVPTRHADLAQCPVAEALFRETLRVHPATPLLVRRALRELRIGQQRIPTGTDLCIPLLHFSTSALLHEAPDQFRLARWLQRTEPIRPVDMLQFGTGPHFCMGYHLVWLELVQFCIALALTMHEAGVRPRLLSGVEKGRRYYPTAHPSMTIRIGFS.

Cysteine 392 is a heme binding site.

Belongs to the cytochrome P450 family. It depends on heme as a cofactor.

Cytochromes P450 are a group of heme-thiolate monooxygenases. They oxidize a variety of structurally unrelated compounds, including steroids, fatty acids, and xenobiotics. The chain is Cytochrome P450 BJ-4 (cyp117) from Bradyrhizobium diazoefficiens (strain JCM 10833 / BCRC 13528 / IAM 13628 / NBRC 14792 / USDA 110).